Consider the following 355-residue polypeptide: NAD-dependent protein deacylase sirtuin-6 (355 aa).

S2 carries the post-translational modification N-acetylserine. A Phosphoserine modification is found at S10. One can recognise a Deacetylase sirtuin-type domain in the interval 27–272; the sequence is PEELERKVWE…TRLMKHLGLE (246 aa). Residue K33 is modified to N6-acetyllysine. NAD(+) contacts are provided by A53, T57, F64, R65, W71, Q113, and H133. The active-site Proton acceptor is the H133. Zn(2+)-binding residues include C141, C144, and C166. K170 participates in a covalent cross-link: Glycyl lysine isopeptide (Lys-Gly) (interchain with G-Cter in ubiquitin). C177 is a binding site for Zn(2+). Residues G214, S216, N240, Q242, and V258 each contribute to the NAD(+) site. The segment at 284–355 is disordered; sequence RALPPLPRPP…KRVKAEAVPS (72 aa). Over residues 287–296 the composition is skewed to pro residues; sequence PPLPRPPTPK. Position 294 is a phosphothreonine (T294). S303 and S330 each carry phosphoserine.

The protein belongs to the sirtuin family. Class IV subfamily. As to quaternary structure, homodimer; binds to nucleosomes and DNA ends as a homodimer. Interacts with RELA; interferes with RELA binding to target DNA. Interacts with SMARCA5; promoting recruitment of SMARCA5/SNF2H to double-strand breaks (DSBs) sites. Interacts with the mTORC2 complex; preventing the ability of SIRT6 to deacetylate FOXO1. Interacts with the CLOCK-BMAL1 complex; recruited by the CLOCK-BMAL1 complex to regulate expression of clock-controlled genes. Interacts with CSNK2A2; preventing CSNK2A2 localization to the nucleus. Acetylated at Lys-33. Deacetylation at Lys-33 by SIRT1 promotes homomultimerization and binding to double-strand breaks (DSBs) sites. Post-translationally, phosphorylation at Ser-10 by MAPK8/JNK1 in response to oxidative stress stimulates the mono-ADP-ribosyltransferase activity on PARP1, leading to PARP1 recruitment to double-strand breaks (DSBs). In terms of processing, monoubiquitinated at Lys-170 by STUB1/CHIP, preventing its degradation by the proteasome. Sumoylated, leading to specifically decrease ability to deacetylate histone H3 at 'Lys-56' (H3K56ac).

The protein localises to the nucleus. It is found in the chromosome. Its subcellular location is the telomere. The protein resides in the endoplasmic reticulum. It catalyses the reaction N(6)-acetyl-L-lysyl-[protein] + NAD(+) + H2O = 2''-O-acetyl-ADP-D-ribose + nicotinamide + L-lysyl-[protein]. It carries out the reaction N(6)-tetradecanoyl-L-lysyl-[protein] + NAD(+) + H2O = 2''-O-tetradecanoyl-ADP-D-ribose + nicotinamide + L-lysyl-[protein]. The catalysed reaction is N(6)-hexadecanoyl-L-lysyl-[protein] + NAD(+) + H2O = 2''-O-hexadecanoyl-ADP-D-ribose + nicotinamide + L-lysyl-[protein]. The enzyme catalyses L-lysyl-[protein] + NAD(+) = N(6)-(ADP-D-ribosyl)-L-lysyl-[protein] + nicotinamide + H(+). It catalyses the reaction L-arginyl-[protein] + NAD(+) = N(omega)-(ADP-D-ribosyl)-L-arginyl-[protein] + nicotinamide + H(+). With respect to regulation, compared to the defatty-acylase activity, the protein deacetylase activity is weak in vitro, and requires activation. The histone deacetylase activity is strongly activated upon binding to nucleosomes and chromatin in vivo. Two molecules of SIRT6 associate with the acidic patch of one nucleosome, while the C-terminal disordered region of SIRT6 associates with nucleosomal DNA, leading to efficient histone deacetylation. The protein-lysine deacetylase activity is also activated by long-chain free fatty-acids. Its function is as follows. NAD-dependent protein deacetylase, deacylase and mono-ADP-ribosyltransferase that plays an essential role in DNA damage repair, telomere maintenance, metabolic homeostasis, inflammation, tumorigenesis and aging. Displays protein-lysine deacetylase or defatty-acylase (demyristoylase and depalmitoylase) activity, depending on the context. Acts as a key histone deacetylase by catalyzing deacetylation of histone H3 at 'Lys-9', 'Lys-18' and 'Lys-56' (H3K9ac, H3K18ac and H3K56ac, respectively), suppressing target gene expression of several transcription factors, including NF-kappa-B. Acts as an inhibitor of transcription elongation by mediating deacetylation of H3K9ac and H3K56ac, preventing release of NELFE from chromatin and causing transcriptional pausing. Involved in DNA repair by promoting double-strand break (DSB) repair: acts as a DSB sensor by recognizing and binding DSB sites, leading to (1) recruitment of DNA repair proteins, such as SMARCA5/SNF2H, and (2) deacetylation of histone H3K9ac and H3K56ac. SIRT6 participation to DSB repair is probably involved in extension of life span. Also promotes DNA repair by deacetylating non-histone proteins, such as DDB2 and p53/TP53. Specifically deacetylates H3K18ac at pericentric heterochromatin, thereby maintaining pericentric heterochromatin silencing at centromeres and protecting against genomic instability and cellular senescence. Involved in telomere maintenance by catalyzing deacetylation of histone H3 in telomeric chromatin, regulating telomere position effect and telomere movement in response to DNA damage. Required for embryonic stem cell differentiation by mediating histone deacetylation of H3K9ac. Plays a major role in metabolism by regulating processes such as glycolysis, gluconeogenesis, insulin secretion and lipid metabolism. Inhibits glycolysis via histone deacetylase activity and by acting as a corepressor of the transcription factor HIF1A, thereby controlling the expression of multiple glycolytic genes. Has tumor suppressor activity by repressing glycolysis, thereby inhibiting the Warburg effect. Also regulates glycolysis and tumorigenesis by mediating deacetylation and nuclear export of non-histone proteins, such as isoform M2 of PKM (PKM2). Acts as a negative regulator of gluconeogenesis by mediating deacetylation of non-histone proteins, such as FOXO1 and KAT2A/GCN5. Promotes beta-oxidation of fatty acids during fasting by catalyzing deacetylation of NCOA2, inducing coactivation of PPARA. Acts as a regulator of lipid catabolism in brown adipocytes, both by catalyzing deacetylation of histones and non-histone proteins, such as FOXO1. Also acts as a regulator of circadian rhythms, both by regulating expression of clock-controlled genes involved in lipid and carbohydrate metabolism, and by catalyzing deacetylation of PER2. The defatty-acylase activity is specifically involved in regulation of protein secretion. Has high activity toward long-chain fatty acyl groups and mediates protein-lysine demyristoylation and depalmitoylation of target proteins, such as RRAS2 and TNF, thereby regulating their secretion. Also acts as a mono-ADP-ribosyltransferase by mediating mono-ADP-ribosylation of PARP1, TRIM28/KAP1 or SMARCC2/BAF170. Mono-ADP-ribosyltransferase activity is involved in DNA repair, cellular senescence, repression of LINE-1 retrotransposon elements and regulation of transcription. The polypeptide is NAD-dependent protein deacylase sirtuin-6 (Macaca fascicularis (Crab-eating macaque)).